Reading from the N-terminus, the 432-residue chain is Eukaryotic translation initiation factor 3 subunit E (432 aa).

The PCI domain maps to 221–401; sequence VYYNYPKGRD…MGVKSVSIHE (181 aa).

This sequence belongs to the eIF-3 subunit E family. Component of the eukaryotic translation initiation factor 3 (eIF-3) complex.

Its subcellular location is the cytoplasm. Component of the eukaryotic translation initiation factor 3 (eIF-3) complex, which is involved in protein synthesis of a specialized repertoire of mRNAs and, together with other initiation factors, stimulates binding of mRNA and methionyl-tRNAi to the 40S ribosome. The eIF-3 complex specifically targets and initiates translation of a subset of mRNAs involved in cell proliferation. The polypeptide is Eukaryotic translation initiation factor 3 subunit E (Caenorhabditis elegans).